The sequence spans 300 residues: Ribosomal protein bS6--L-glutamate ligase (300 aa).

The region spanning M104 to E287 is the ATP-grasp domain. ATP contacts are provided by residues K141, E178–Y179, D187, and R211–N213. 3 residues coordinate Mg(2+): D248, E260, and N262. Residues D248, E260, and N262 each contribute to the Mn(2+) site.

The protein belongs to the RimK family. Mg(2+) is required as a cofactor. Mn(2+) serves as cofactor.

An L-glutamate ligase that catalyzes the ATP-dependent post-translational addition of glutamate residues to the C-terminus of ribosomal protein bS6 (RpsF). Is also able to catalyze the synthesis of poly-alpha-glutamate in vitro, via ATP hydrolysis from unprotected glutamate as substrate. The number of glutamate residues added to either RpsF or to poly-alpha-glutamate changes with pH. This is Ribosomal protein bS6--L-glutamate ligase from Escherichia coli O81 (strain ED1a).